We begin with the raw amino-acid sequence, 157 residues long: Arginine repressor (157 aa).

This sequence belongs to the ArgR family.

The protein resides in the cytoplasm. It participates in amino-acid biosynthesis; L-arginine biosynthesis [regulation]. Regulates arginine biosynthesis genes. The polypeptide is Arginine repressor (Lactobacillus delbrueckii subsp. bulgaricus (strain ATCC 11842 / DSM 20081 / BCRC 10696 / JCM 1002 / NBRC 13953 / NCIMB 11778 / NCTC 12712 / WDCM 00102 / Lb 14)).